The following is a 443-amino-acid chain: Xaa-Pro dipeptidase (443 aa).

Residues aspartate 246, aspartate 257, histidine 339, glutamate 384, and glutamate 423 each contribute to the Mn(2+) site.

This sequence belongs to the peptidase M24B family. Bacterial-type prolidase subfamily. Requires Mn(2+) as cofactor.

It carries out the reaction Xaa-L-Pro dipeptide + H2O = an L-alpha-amino acid + L-proline. Functionally, splits dipeptides with a prolyl residue in the C-terminal position. This is Xaa-Pro dipeptidase from Escherichia coli (strain SMS-3-5 / SECEC).